The following is a 132-amino-acid chain: Small ribosomal subunit protein uS17c (132 aa).

Positions 1-11 are enriched in low complexity; that stretch reads MLLLSSPFVSV. Disordered stretches follow at residues 1 to 23 and 104 to 132; these read MLLL…SHGA and PLPP…SSRE. Residues 1–31 constitute a chloroplast transit peptide; sequence MLLLSSPFVSVSPPPPPLSSHGARPALRIEA. Acidic residues predominate over residues 122-132; sequence SDDDQEPSSRE.

It belongs to the universal ribosomal protein uS17 family. As to quaternary structure, part of the 30S ribosomal subunit.

The protein resides in the plastid. Its subcellular location is the chloroplast. In terms of biological role, one of the primary rRNA binding proteins, it binds specifically to the 5'-end of 16S ribosomal RNA. Its function is as follows. In the hcf60 mutation the Activator tag is inserted 17 base pars upstream of the initiation codon. This mutation is seedling lethal, due to plastid ribosome insufficiency. However under non-light stressed conditions photosynthesis and oxygen evolution can occur. This Zea mays (Maize) protein is Small ribosomal subunit protein uS17c (RPS17).